Consider the following 156-residue polypeptide: MKKYYLIVLISFLIFYLSIFLAPYFAYLGETSNFWKFISICLYAVYSLICHQMPQRSFFIFGHKMAVCARCFGIYTGVLVGMIIYPFIKKLDDFKIPNKWYLIIALIPMAVDGTTQLIGLRESFNELRFITGFIAGFTVVFYILPIFFEMIYKKFK.

The next 5 helical transmembrane spans lie at 6–26 (LIVL…PYFA), 34–54 (FWKF…HQMP), 68–88 (CARC…YPFI), 100–120 (WYLI…LIGL), and 129–149 (FITG…IFFE).

The protein resides in the cell membrane. This is an uncharacterized protein from Methanocaldococcus jannaschii (strain ATCC 43067 / DSM 2661 / JAL-1 / JCM 10045 / NBRC 100440) (Methanococcus jannaschii).